The sequence spans 168 residues: Mitochondrial inner membrane protein Mpv17 (168 aa).

The next 4 membrane-spanning stretches (helical) occupy residues 12–29 (INVA…QFFF), 41–61 (RTLR…RRWY), 82–101 (MLVD…SFLV), and 144–166 (LGYQ…SMIL).

The protein belongs to the peroxisomal membrane protein PXMP2/4 family. Part of a larger complex that may be a homohexamer.

It localises to the mitochondrion inner membrane. Functionally, non-selective channel that modulates the membrane potential under normal conditions and oxidative stress, and is involved in mitochondrial homeostasis. Can translocate uridine, but not orotate, across a lipid membrane. Involved in maintenance of mitochondrial ultrastructure. May be involved in mitochondrial DNA (mtDNA) maintenance but does not appear to be directly involved in mitochondrial deoxynucleoside triphosphate (dNTP) pool homeostasis. May be involved in the regulation of reactive oxygen species metabolism and the control of oxidative phosphorylation. This is Mitochondrial inner membrane protein Mpv17 from Drosophila melanogaster (Fruit fly).